The following is an 861-amino-acid chain: Integrator complex subunit 6-like (861 aa).

Residues 3-227 form the VWFA domain; the sequence is ILLFLIDTSA…QCLESLVQKV (225 aa). The residue at position 617 (Ser617) is a Phosphoserine.

The sequence is that of Integrator complex subunit 6-like (Ints6l) from Mus musculus (Mouse).